The chain runs to 460 residues: Proline--tRNA ligase (460 aa).

Belongs to the class-II aminoacyl-tRNA synthetase family. ProS type 3 subfamily. As to quaternary structure, homodimer.

It is found in the cytoplasm. The catalysed reaction is tRNA(Pro) + L-proline + ATP = L-prolyl-tRNA(Pro) + AMP + diphosphate. Catalyzes the attachment of proline to tRNA(Pro) in a two-step reaction: proline is first activated by ATP to form Pro-AMP and then transferred to the acceptor end of tRNA(Pro). This is Proline--tRNA ligase from Methanococcus maripaludis (strain C7 / ATCC BAA-1331).